A 144-amino-acid chain; its full sequence is Large ribosomal subunit protein uL15 (144 aa).

Positions 1–53 are disordered; it reads MRLNTLSPAEGAKHAPKRLGRGIGSGLGKTGGRGHKGQKSRSGGGVRRGFEGG. Residues 21 to 31 show a composition bias toward gly residues; that stretch reads RGIGSGLGKTG.

The protein belongs to the universal ribosomal protein uL15 family. Part of the 50S ribosomal subunit.

Binds to the 23S rRNA. The polypeptide is Large ribosomal subunit protein uL15 (Pectobacterium carotovorum subsp. carotovorum (strain PC1)).